The chain runs to 280 residues: Ribosomal RNA large subunit methyltransferase J (280 aa).

Residues His19, His42, Ser100, Glu118, 143–144, and Asp164 contribute to the S-adenosyl-L-methionine site; that span reads DG. Asp164 acts as the Proton acceptor in catalysis.

This sequence belongs to the RlmJ family. In terms of assembly, monomer.

It carries out the reaction adenosine(2030) in 23S rRNA + S-adenosyl-L-methionine = N(6)-methyladenosine(2030) in 23S rRNA + S-adenosyl-L-homocysteine + H(+). Specifically methylates the adenine in position 2030 of 23S rRNA. Nascent 23S rRNA seems to be the natural substrate. Appears to be not necessary for ribosome assembly. Required for the utilization of extracellular DNA as the sole source of carbon and energy. This chain is Ribosomal RNA large subunit methyltransferase J, found in Escherichia coli (strain K12).